The primary structure comprises 366 residues: Chorismate synthase (366 aa).

Arginine 48 and arginine 54 together coordinate NADP(+). FMN is bound by residues 132–134 (RSS), 244–245 (NA), glycine 289, 304–308 (KPTSS), and arginine 330.

It belongs to the chorismate synthase family. Homotetramer. Requires FMNH2 as cofactor.

It catalyses the reaction 5-O-(1-carboxyvinyl)-3-phosphoshikimate = chorismate + phosphate. Its pathway is metabolic intermediate biosynthesis; chorismate biosynthesis; chorismate from D-erythrose 4-phosphate and phosphoenolpyruvate: step 7/7. Functionally, catalyzes the anti-1,4-elimination of the C-3 phosphate and the C-6 proR hydrogen from 5-enolpyruvylshikimate-3-phosphate (EPSP) to yield chorismate, which is the branch point compound that serves as the starting substrate for the three terminal pathways of aromatic amino acid biosynthesis. This reaction introduces a second double bond into the aromatic ring system. The sequence is that of Chorismate synthase from Methylorubrum populi (strain ATCC BAA-705 / NCIMB 13946 / BJ001) (Methylobacterium populi).